Here is an 844-residue protein sequence, read N- to C-terminus: Fe(2+) transport protein A/Fe(2+) transporter FeoB fusion protein (844 aa).

The tract at residues 1–73 is feoA; sequence MRLSELHTGD…EDAAKIEVEL (73 aa). Residues 74–844 are feoB; it reads ISSNATSSPA…LIYRIGILFF (771 aa). The segment covering 79–106 has biased composition (polar residues); the sequence is TSSPASNDIGEQSANPDSNESIPTNPTE. The tract at residues 79–110 is disordered; that stretch reads TSSPASNDIGEQSANPDSNESIPTNPTEDISA. The FeoB-type G domain occupies 126 to 289; sequence VIRVALIGNP…FDTLISIHEG (164 aa). GTP is bound by residues 133 to 140, 158 to 162, 179 to 182, 240 to 243, and 269 to 271; these read GNPNCGKT, GVTVE, DLPG, NMFD, and VGR. The next 8 membrane-spanning stretches (helical) occupy residues 418–438, 475–495, 520–540, 559–579, 581–601, 646–666, 786–806, and 817–837; these read VLGF…TFVL, IGGV…YFFI, LHGK…PAIM, PLMS…AFFP, SAGL…VLLA, MGSI…YPRY, IIAL…ATVV, and WAVF…FLIY.

It in the N-terminal section; belongs to the FeoA family. In the C-terminal section; belongs to the TRAFAC class TrmE-Era-EngA-EngB-Septin-like GTPase superfamily. FeoB GTPase (TC 9.A.8) family.

The protein localises to the cell inner membrane. In terms of biological role, probable transporter of a GTP-driven Fe(2+) uptake system. The polypeptide is Fe(2+) transport protein A/Fe(2+) transporter FeoB fusion protein (Porphyromonas gingivalis (strain ATCC BAA-308 / W83)).